The primary structure comprises 506 residues: Gallate 1-beta-glucosyltransferase 84A23 (506 aa).

Residue His20 is the Proton acceptor of the active site. His20 is an an anthocyanidin binding site. Residues Gln345, His360, Trp363, Asn364, Ser365, and Glu368 each coordinate UDP-alpha-D-glucose. Gly383 is a binding site for an anthocyanidin. Positions 384 and 385 each coordinate UDP-alpha-D-glucose.

Belongs to the UDP-glycosyltransferase family. Expressed in roots of the seedlings.

The protein localises to the cytoplasm. The enzyme catalyses 3,4,5-trihydroxybenzoate + UDP-alpha-D-glucose = 1-O-galloyl-beta-D-glucose + UDP. The catalysed reaction is 3,4-dihydroxybenzoate + UDP-alpha-D-glucose = 1-O-(3,4-dihydroxy-benzoyl)-beta-D-glucose + UDP. It carries out the reaction 4-hydroxybenzoate + UDP-alpha-D-glucose = 4-(beta-D-glucosyloxy)benzoate + UDP + H(+). It catalyses the reaction (E)-cinnamate + UDP-alpha-D-glucose = 1-O-(trans-cinnamoyl)-beta-D-glucose + UDP. The enzyme catalyses (E)-sinapate + UDP-alpha-D-glucose = 1-O-(trans-sinapoyl)-beta-D-glucose + UDP. The catalysed reaction is (E)-4-coumarate + UDP-alpha-D-glucose = 1-O-(trans-4-coumaroyl)-beta-D-glucose + UDP. It carries out the reaction (E)-caffeate + UDP-alpha-D-glucose = 1-O-[(E)-caffeoyl]-beta-D-glucose + UDP. It catalyses the reaction (E)-ferulate + UDP-alpha-D-glucose = 1-O-[(E)-feruloyl]-beta-D-glucose + UDP. The enzyme catalyses genistein + UDP-alpha-D-glucose = genistein 7-O-beta-D-glucoside + UDP + H(+). The catalysed reaction is apigenin + UDP-alpha-D-glucose = apigenin 7-O-beta-D-glucoside + UDP + H(+). It carries out the reaction luteolin + UDP-alpha-D-glucose = luteolin 7-O-beta-D-glucoside + UDP + H(+). Functionally, glucosyltransferase that catalyzes the formation of 1-O-beta-D-glucose esters with hydroxybenzoic acids and cinnamic acid including its derivatives as preferred glucosyl acceptors. Has significant activity with gallic acid (3,4,5-trihydroxybenzoic acid), 3,4-dihydroxybenzoic acid, 4-hydroxybenzoic acid, cinnamic acid, sinapic acid, coumaric acid, caffeic acid and ferulic acid in vitro. Gallic acid is the predicted native substrate of the enzyme, which thus catalyzes the formation of 1-O-galloyl-beta-D-glucose, the first committed step of hydrolyzable tannins (HTs) biosynthesis, with punicalagin isomers being the major HTs of pomegranate. Catalyzes the formation of flavonoid glucosides with genistein, apigenin and luteolin in vitro. Has low activity with benzoic acid, 2-hydroxybenzoic acid, 3-hydroxybenzoic acid, 2,4-dihydroxybenzoic acid, naringenin and quercetin. No activity with catechol, resveratrol, chlorogenic acid, catechin and epicatechin (building blocks of proanthocyanidins) or cyanidin, delphinidin and pelargonidin (the three anthocyanidins). In Punica granatum (Pomegranate), this protein is Gallate 1-beta-glucosyltransferase 84A23.